Consider the following 707-residue polypeptide: MASWLKAAEDLFEVVDRRAKSVVEDLSEEQNDLQLPASGRKGSQGKRTSSKKKKLVKEESSNKRDSSGDQSGPGVSQSEVPPSKSSVSTDETSSSGPVLLTREIHPTDADVQSVLSLPLSVADTKSDDAAVVAQESIVDGDRSESKHADGDIPNDSLVQPSPSLPDKEIEVVVSENLMDAPKNGTQRELDDSSKRDVENLDSVVHAPSVNEGNVAQSTGDEVKVGTSINLEKEQEPKVPVTSTNLKREQDRRADTTSMKIQDQLEEAQGLLKATVSTGQSKEARLARVCAGLSSRLQEIKAENAQLEELLTAEQELTKSYEASIRHLQKDLSAAKSEVTKVESSMVEALAAKNSEIETLVSAMDALKNQAALNEGKLSSLQGDMESIMRNRELAETRMMQALREELATTERRAEEERSAHNATKMAAMERERELEHRAVDASTALVRIQRIADERTAKVADFEQKVALLEAECTSLNQELQDMEVRARRGQKKAPDEANQVIQIQAWQDEVDRARQGQRDAEEKLSLMEAEMQKLRVEMAAMKRDAEHYSRQEHTELEKRYRELTDLLYYKQTQLETMASEKAAAEFQLEKEVKRLHEAQVEVEKSRVSRRASATWEEDSEIKTLEPLPLYHRHMATASTQLQNAVKLLDSGAVRATRFLWRYPIARMFLLFYLVFVHLFLMYLIHRLQEQAEAQEVAAMTNNVFRL.

The Cytoplasmic portion of the chain corresponds to 1 to 664; that stretch reads MASWLKAAED…RATRFLWRYP (664 aa). Disordered regions lie at residues 22–106, 121–196, and 234–256; these read VVED…EIHP, VADT…SKRD, and QEPK…ADTT. Positions 38–47 are enriched in low complexity; that stretch reads SGRKGSQGKR. Basic and acidic residues predominate over residues 56-67; that stretch reads VKEESSNKRDSS. The span at 68–80 shows a compositional bias: polar residues; it reads GDQSGPGVSQSEV. The span at 83–95 shows a compositional bias: low complexity; it reads SKSSVSTDETSSS. Composition is skewed to basic and acidic residues over residues 139–150, 185–196, and 245–254; these read DGDRSESKHADG, TQRELDDSSKRD, and LKREQDRRAD. Coiled coils occupy residues 287 to 424 and 452 to 608; these read RVCA…NATK and ADER…KSRV. The chain crosses the membrane as a helical; Signal-anchor for type II membrane protein span at residues 665-685; sequence IARMFLLFYLVFVHLFLMYLI. Residues 686-707 are Lumenal-facing; the sequence is HRLQEQAEAQEVAAMTNNVFRL.

The protein resides in the golgi apparatus membrane. In terms of biological role, golgi matrix protein playing a role in tethering of vesicles to Golgi membranes and in maintaining the overall structure of the Golgi apparatus. The polypeptide is Golgin candidate 1 (GC1) (Arabidopsis thaliana (Mouse-ear cress)).